The primary structure comprises 302 residues: N-acetylmuramic acid 6-phosphate etherase (302 aa).

Positions 57-220 (IADRFRSNGR…TTGAMIRIGK (164 aa)) constitute an SIS domain. Catalysis depends on Glu85, which acts as the Proton donor. Glu116 is an active-site residue.

The protein belongs to the GCKR-like family. MurNAc-6-P etherase subfamily. As to quaternary structure, homodimer.

It carries out the reaction N-acetyl-D-muramate 6-phosphate + H2O = N-acetyl-D-glucosamine 6-phosphate + (R)-lactate. It participates in amino-sugar metabolism; N-acetylmuramate degradation. Specifically catalyzes the cleavage of the D-lactyl ether substituent of MurNAc 6-phosphate, producing GlcNAc 6-phosphate and D-lactate. The polypeptide is N-acetylmuramic acid 6-phosphate etherase (Rhodopirellula baltica (strain DSM 10527 / NCIMB 13988 / SH1)).